The primary structure comprises 84 residues: Small ribosomal subunit protein uS17 (84 aa).

It belongs to the universal ribosomal protein uS17 family. In terms of assembly, part of the 30S ribosomal subunit.

In terms of biological role, one of the primary rRNA binding proteins, it binds specifically to the 5'-end of 16S ribosomal RNA. In Clostridium botulinum (strain Eklund 17B / Type B), this protein is Small ribosomal subunit protein uS17.